The primary structure comprises 207 residues: Large ribosomal subunit protein bL25 (207 aa).

The disordered stretch occupies residues 171–207 (EEETVVTVSAPRAEEEPTTTEAPEPEAVHGKDEEPVE). Basic and acidic residues predominate over residues 196–207 (EAVHGKDEEPVE).

It belongs to the bacterial ribosomal protein bL25 family. CTC subfamily. In terms of assembly, part of the 50S ribosomal subunit; part of the 5S rRNA/L5/L18/L25 subcomplex. Contacts the 5S rRNA. Binds to the 5S rRNA independently of L5 and L18.

This is one of the proteins that binds to the 5S RNA in the ribosome where it forms part of the central protuberance. This chain is Large ribosomal subunit protein bL25, found in Listeria monocytogenes serotype 4b (strain F2365).